The sequence spans 147 residues: Hemoglobin subunit beta (147 aa).

In terms of domain architecture, Globin spans 3 to 147 (HWTAEEKQII…VAHALARKYH (145 aa)). Heme b is bound by residues His64 and His93.

In terms of assembly, heterotetramer of two alpha (or alpha-D) and two beta chains. Red blood cells.

Functionally, involved in oxygen transport from the lung to the various peripheral tissues. The beta chain is a component of adult hemoglobin A and D. The chain is Hemoglobin subunit beta from Aythya fuligula (Tufted duck).